Consider the following 146-residue polypeptide: Glycosylation-dependent cell adhesion molecule 1 (146 aa).

The N-terminal stretch at 1-19 is a signal peptide; the sequence is MKFFTVLLFASLAATSLAA. Residues 25 to 112 form a disordered region; the sequence is DELHLRTQPT…SAATSEGKLT (88 aa). Residues 48 to 60 show a composition bias toward basic and acidic residues; sequence ISKESTSSKDLSK. Phosphoserine occurs at positions 54, 59, and 71. Positions 74-106 are enriched in polar residues; sequence NVGTESTKPQSQEAQDGLRSGSSQQEETTSAAT.

It belongs to the PP3/GlyCAM-1 family. In terms of processing, extensively O-glycosylated. As to expression, lymph nodes. Associated with the lumenal surface of the high endothelial venules of peripheral lymph nodes.

The protein resides in the cell membrane. In terms of biological role, adhesion molecule that accomplishes cell binding by presenting carbohydrate(s) to the lectin domain of L-selectin. This Rattus norvegicus (Rat) protein is Glycosylation-dependent cell adhesion molecule 1 (Glycam1).